Reading from the N-terminus, the 332-residue chain is MSKVAVFGMGSFGTALANVLAQNGHDVLMWGKNKQSIDEVNQYHSNSRYLNGAQLDKSITATSNLNEAINFSDTYLIALPTKAIREVIKNIDSQLDSKKVFIHVAKGIENATFKRVSEMIEDSLSPEHNGGIGVLSGPSHAEEVVIQQPTTVAASSPDPKVSKLIQDLFMNDYLRVYTNDDLVGVELGGALKNIIAVASGIVAGMGFGDNAKAALMTRGLAEISRLGEELGADPMTFLGLGGIGDLIVTCTSTHSRNYTLGYKIGQGKTVDEALSEMNMVAEGFYTTESVYHLAKQRNIDMPITSALYGVLFKQVPLDESLKLLMGRDKKSE.

NADPH contacts are provided by Ser-11, Phe-12, Lys-32, and Lys-106. Sn-glycerol 3-phosphate-binding residues include Lys-106, Gly-137, and Ser-139. Ala-141 provides a ligand contact to NADPH. Sn-glycerol 3-phosphate-binding residues include Lys-192, Asp-245, Ser-255, Arg-256, and Asn-257. Lys-192 serves as the catalytic Proton acceptor. Arg-256 is an NADPH binding site. NADPH-binding residues include Val-280 and Glu-282.

The protein belongs to the NAD-dependent glycerol-3-phosphate dehydrogenase family.

It localises to the cytoplasm. The catalysed reaction is sn-glycerol 3-phosphate + NAD(+) = dihydroxyacetone phosphate + NADH + H(+). It carries out the reaction sn-glycerol 3-phosphate + NADP(+) = dihydroxyacetone phosphate + NADPH + H(+). The protein operates within membrane lipid metabolism; glycerophospholipid metabolism. Catalyzes the reduction of the glycolytic intermediate dihydroxyacetone phosphate (DHAP) to sn-glycerol 3-phosphate (G3P), the key precursor for phospholipid synthesis. This Staphylococcus carnosus (strain TM300) protein is Glycerol-3-phosphate dehydrogenase [NAD(P)+].